Reading from the N-terminus, the 20-residue chain is Cuticle-degrading protease-like protein (20 aa).

Positions 1 to 20 (AIVEQQGAPXGLGRIINKXK) are disordered.

The protein belongs to the peptidase S8 family.

It localises to the secreted. Functionally, capable of breaching the insect cuticle. The sequence is that of Cuticle-degrading protease-like protein from Metacordyceps chlamydosporia (Nematophagous fungus).